We begin with the raw amino-acid sequence, 113 residues long: Ig heavy chain V-III region U61 (113 aa).

The region spanning 1–113 (EVKLEESGGG…YWGQGTLVPV (113 aa)) is the Ig-like domain. A disulfide bond links Cys-22 and Cys-98.

The protein is Ig heavy chain V-III region U61 of Mus musculus (Mouse).